The chain runs to 203 residues: Urease accessory protein UreG (203 aa).

13 to 20 (GPVGSGKT) is a binding site for GTP.

This sequence belongs to the SIMIBI class G3E GTPase family. UreG subfamily. Homodimer. UreD, UreF and UreG form a complex that acts as a GTP-hydrolysis-dependent molecular chaperone, activating the urease apoprotein by helping to assemble the nickel containing metallocenter of UreC. The UreE protein probably delivers the nickel.

The protein resides in the cytoplasm. Facilitates the functional incorporation of the urease nickel metallocenter. This process requires GTP hydrolysis, probably effectuated by UreG. The sequence is that of Urease accessory protein UreG from Methylobacillus flagellatus (strain ATCC 51484 / DSM 6875 / VKM B-1610 / KT).